The sequence spans 367 residues: TATA-box-binding protein-like (367 aa).

Residues 1–26 (MKKQSKTHKVDYKYYNSGSKTSRNRN) form a disordered region. The span at 16–26 (NSGSKTSRNRN) shows a compositional bias: polar residues.

It belongs to the TBP family.

The protein is TATA-box-binding protein-like of Acanthamoeba polyphaga (Amoeba).